The following is a 360-amino-acid chain: Probable dual-specificity RNA methyltransferase RlmN (360 aa).

The active-site Proton acceptor is Glu-97. In terms of domain architecture, Radical SAM core spans 103 to 330 (DGDRLTFCIS…TAVRRSRGLD (228 aa)). A disulfide bridge links Cys-110 with Cys-335. Residues Cys-117, Cys-121, and Cys-124 each coordinate [4Fe-4S] cluster. Residues 165–166 (GE), Ser-197, 220–222 (SIH), and His-292 contribute to the S-adenosyl-L-methionine site. Cys-335 (S-methylcysteine intermediate) is an active-site residue.

This sequence belongs to the radical SAM superfamily. RlmN family. It depends on [4Fe-4S] cluster as a cofactor.

The protein resides in the cytoplasm. The catalysed reaction is adenosine(2503) in 23S rRNA + 2 reduced [2Fe-2S]-[ferredoxin] + 2 S-adenosyl-L-methionine = 2-methyladenosine(2503) in 23S rRNA + 5'-deoxyadenosine + L-methionine + 2 oxidized [2Fe-2S]-[ferredoxin] + S-adenosyl-L-homocysteine. It catalyses the reaction adenosine(37) in tRNA + 2 reduced [2Fe-2S]-[ferredoxin] + 2 S-adenosyl-L-methionine = 2-methyladenosine(37) in tRNA + 5'-deoxyadenosine + L-methionine + 2 oxidized [2Fe-2S]-[ferredoxin] + S-adenosyl-L-homocysteine. Its function is as follows. Specifically methylates position 2 of adenine 2503 in 23S rRNA and position 2 of adenine 37 in tRNAs. The protein is Probable dual-specificity RNA methyltransferase RlmN of Gemmatimonas aurantiaca (strain DSM 14586 / JCM 11422 / NBRC 100505 / T-27).